We begin with the raw amino-acid sequence, 676 residues long: Mucin-1 (676 aa).

The signal sequence occupies residues 1–25 (MTPGIRAPFLLTLLLALVTDPNSVA). Positions 25–387 (ALSQDTSSSS…VHNGSLVPTT (363 aa)) are disordered. The Extracellular portion of the chain corresponds to 26–582 (LSQDTSSSST…QSWPGVPGWG (557 aa)). 13 repeat units span residues 40–59 (PVHSGSSAPATSSAVDSATT), 60–79 (PGHSGSSAPPTSSAVNSATT), 80–99 (PGHSGSSAPPTSSAVNSATT), 100–119 (PVHSGSSAPVTSSAVNSATT), 120–139 (PVHSGSSAPPTSSAVNSATT), 140–159 (PVHSGSSAPVTSSAVNSATT), 160–179 (PVHSGSSAPVTSSAVDSATT), 180–199 (PVHSGSSAPPTSSAVNSATT), 200–219 (PVHSGSSAPVTSSAVNSATT), 220–239 (PVHSGSSAPVTSSAVNSATT), 240–259 (PVHSGSSAPPTSSVVNSATT), 260–279 (PVHSGSSAPPTSSAVNLATT), and 280–299 (PVHSGSSTPATNSTTDSATT). Residues 40-314 (PVHSGSSAPA…SSMQTTEAIS (275 aa)) form a 13 X approximate tandem repeats of P-V-H-S-G-S-S-A-P-P-T-S-S-A-V-N-S-A-T-T region. 3 O-linked (GalNAc...) serine glycosylation sites follow: Ser-43, Ser-45, and Ser-46. Residue Thr-50 is glycosylated (O-linked (GalNAc...) threonine). 3 O-linked (GalNAc...) serine glycosylation sites follow: Ser-51, Ser-52, and Ser-56. O-linked (GalNAc...) threonine glycans are attached at residues Thr-58 and Thr-59. N-linked (GlcNAc...) asparagine glycans are attached at residues Asn-291, Asn-323, Asn-350, Asn-380, Asn-400, Asn-413, Asn-435, Asn-479, Asn-496, and Asn-536. Polar residues predominate over residues 404–420 (TMATTTPVGNGTQSSVP). The interval 404-434 (TMATTTPVGNGTQSSVPSRHPVTPTPPAVSS) is disordered. The region spanning 463 to 570 (GVSFFLLSFH…INVGEMQFPS (108 aa)) is the SEA domain. The helical transmembrane segment at 583–603 (IALLVLVCILVALAIVYLIAL) threads the bilayer. At 604-676 (AVCQCRRKNY…PVVATTSANL (73 aa)) the chain is on the cytoplasmic side. 2 S-palmitoyl cysteine lipidation sites follow: Cys-606 and Cys-608. The tract at residues 614 to 650 (GQLDIFPIQDSYHPMSEYPTYHTHGRYVPPGSTKRSP) is interaction with P53. Phosphotyrosine; by PDGFR is present on Tyr-625. The Interaction with GRB2 motif lies at 625–628 (YHPM). Tyr-634 is subject to Phosphotyrosine. Residues 636–659 (THGRYVPPGSTKRSPYEEVSAGNG) are disordered. Tyr-640 carries the phosphotyrosine; by PDGFR modification. A required for interaction with GSK3B region spans residues 645-652 (STKRSPYE). Thr-646 bears the Phosphothreonine; by PKC/PRKCD mark. Ser-649 is subject to Phosphoserine; by GSK3-beta. The residue at position 651 (Tyr-651) is a Phosphotyrosine; by CSK, EGFR and SRC. The Interaction with SRC and ESR1 motif lies at 651–654 (YEEV). The interval 655-662 (SAGNGSSL) is required for interaction with beta- and gamma-catenins. Phosphotyrosine is present on Tyr-664. The Required for interaction with AP1S2 signature appears at 664 to 667 (YTNP).

As to quaternary structure, the alpha subunit forms a tight, non-covalent heterodimeric complex with the proteolytically-released beta-subunit. Binds directly the SH2 domain of GRB2, and forms a MUC1/GRB2/SOS1 complex involved in RAS signaling. The cytoplasmic tail (MUC1CT) interacts with several proteins such as SRC, CTNNB1 and ERBs. Interaction with the SH2 domain of CSK decreases interaction with GSK3B. Interacts with CTNNB1/beta-catenin and JUP/gamma-catenin and promotes cell adhesion. Interaction with JUP/gamma-catenin is induced by heregulin. Binds PRKCD, ERBB2, ERBB3 and ERBB4. Heregulin (HRG) stimulates the interaction with ERBB2 and, to a much lesser extent, the interaction with ERBB3 and ERBB4. Interacts with P53 in response to DNA damage. Interacts with KLF4. Interacts with estrogen receptor alpha/ESR1, through its DNA-binding domain, and stimulates its transcription activity. Binds ADAM17. Post-translationally, probably both N- and O-glycosylated (in repeat region). In terms of processing, proteolytic cleavage in the SEA domain occurs in the endoplasmic reticulum by an autoproteolytic mechanism and requires the full-length SEA domain as well as requiring a Ser, Thr or Cys residue at the P + 1 site. Ectodomain shedding is mediated by ADAM17 in uterine epithelial cells. Dual palmitoylation on cysteine residues in the CQC motif is required for recycling from endosomes back to the plasma membrane. Post-translationally, phosphorylated on tyrosines and serine residues in the C-terminal. Phosphorylation on tyrosines in the C-terminal increases the nuclear location of MUC1 and beta-catenin. Phosphorylation by PKC delta induces binding of MUC1 to beta-catenin/CTNNB1 and thus decreases the formation of the beta-catenin/E-cadherin complex. Src-mediated phosphorylation inhibits interaction with GSK3B. Csk- or Src- or EGFR-mediated phosphorylation on Tyr-651 increases binding to beta-catenin/CTNNB1. GSK3B-mediated phosphorylation on Ser-649 decreases this interaction but restores the formation of the beta-cadherin/E-cadherin complex. On T-cell receptor activation, phosphorylated by LCK. PDGFR-mediated phosphorylation increases nuclear colocalization of MUC1CT and CTNNB1.

It localises to the apical cell membrane. The protein resides in the cell membrane. It is found in the cytoplasm. Its subcellular location is the nucleus. In terms of biological role, the alpha subunit has cell adhesive properties. Can act both as an adhesion and an anti-adhesion protein. May provide a protective layer on epithelial cells against bacterial and enzyme attack. The beta subunit contains a C-terminal domain which is involved in cell signaling, through phosphorylations and protein-protein interactions. Modulates signaling in ERK, Src and NF-kappaB pathways. In activated T-cells, influences directly or indirectly the Ras/MAPK pathway. Promotes tumor progression. Regulates P53-mediated transcription and determines cell fate in the genotoxic stress response. Binds, together with KLF4, the PE21 promoter element of P53 and represses P53 activity. This chain is Mucin-1 (MUC1), found in Mesocricetus auratus (Golden hamster).